Reading from the N-terminus, the 382-residue chain is MAVLKMPRFKKYHLRLMITCFSTLLLMTYWEKIDNCVVTHVMSFSYRYLFNSFKFINSSFIVNPEDAIKYNHRYLINHQTKCDNKDILLLLFVKSSSENFERRQAIRSTWGNETYIESTLGVTVKVLFALGLHPIPEERGKLKEDLMFEDQKYRDLIQQDFIDTFHNLTLKLLLQLGWKETYCHHAQFLMSADDDVFVHTPNLILYLQGFGQSNTRDLWIGGVHRGSPPNRDKESKYYVSRDLYPWLSYPDYTPGSGYVLSRDVVSRIYQASLTINASFHIDDVFLGICAKMMDVSPTDHAFFSGEGKAPHHHCIYSLMMTSHGHVSDIHEMWRHARNAEDVLISSGLFRRLYCTAVKVRLLCVPFFSNSYPCKAAFFEEDT.

Over 1–13 the chain is Cytoplasmic; it reads MAVLKMPRFKKYH. A helical; Signal-anchor for type II membrane protein membrane pass occupies residues 14–30; it reads LRLMITCFSTLLLMTYW. Residues 31–382 lie on the Lumenal side of the membrane; it reads EKIDNCVVTH…CKAAFFEEDT (352 aa). N-linked (GlcNAc...) asparagine glycosylation is found at N57, N112, N167, and N276.

This sequence belongs to the glycosyltransferase 31 family.

It is found in the golgi apparatus membrane. The catalysed reaction is a beta-D-Gal-(1-&gt;4)-beta-D-Glc-(1&lt;-&gt;1)-Cer(d18:1(4E)) + UDP-N-acetyl-alpha-D-glucosamine = a beta-D-GlcNAc-(1-&gt;3)-beta-D-Gal-(1-&gt;4)-beta-D-Glc-(1&lt;-&gt;1)-Cer(d18:1(4E)) + UDP + H(+). The enzyme catalyses a neolactoside nLc4Cer(d18:1(4E)) + UDP-N-acetyl-alpha-D-glucosamine = a neolactoside IV(3)-beta-GlcNAc-nLc4Cer(d18:1(4E)) + UDP + H(+). It participates in protein modification; protein glycosylation. Its function is as follows. Beta-1,3-N-acetylglucosaminyltransferase that plays a key role in the synthesis of lacto- or neolacto-series carbohydrate chains on glycolipids. The polypeptide is Lactosylceramide 1,3-N-acetyl-beta-D-glucosaminyltransferase B (b3gnt5b) (Danio rerio (Zebrafish)).